A 183-amino-acid chain; its full sequence is MKENKPVDPYAKYNEQSNIIAKIIFASRWLQVPIYLGLIVTLAIYSYKFIKGLWELVINVNDMDSNTIMLGVLNLIDVVMIANLLVMVTIGGYEIFVSKLRTRNHPDQPEWMSHVNATVLKVKLSMSIIGISSIHMLQTFVNASNMPEKTMMWQLLLHLGFLVSAIALAYTDKILYSTSHKTH.

Helical transmembrane passes span 30–50 (LQVP…YKFI), 68–88 (IMLG…LVMV), and 150–170 (TMMW…ALAY).

This sequence belongs to the UPF0114 family.

Its subcellular location is the cell membrane. The polypeptide is UPF0114 protein HI_0507 (Haemophilus influenzae (strain ATCC 51907 / DSM 11121 / KW20 / Rd)).